The following is a 251-amino-acid chain: 1-(5-phosphoribosyl)-5-[(5-phosphoribosylamino)methylideneamino] imidazole-4-carboxamide isomerase (251 aa).

D8 (proton acceptor) is an active-site residue. D131 functions as the Proton donor in the catalytic mechanism.

It belongs to the HisA/HisF family.

The protein resides in the cytoplasm. The enzyme catalyses 1-(5-phospho-beta-D-ribosyl)-5-[(5-phospho-beta-D-ribosylamino)methylideneamino]imidazole-4-carboxamide = 5-[(5-phospho-1-deoxy-D-ribulos-1-ylimino)methylamino]-1-(5-phospho-beta-D-ribosyl)imidazole-4-carboxamide. It functions in the pathway amino-acid biosynthesis; L-histidine biosynthesis; L-histidine from 5-phospho-alpha-D-ribose 1-diphosphate: step 4/9. In Burkholderia thailandensis (strain ATCC 700388 / DSM 13276 / CCUG 48851 / CIP 106301 / E264), this protein is 1-(5-phosphoribosyl)-5-[(5-phosphoribosylamino)methylideneamino] imidazole-4-carboxamide isomerase.